We begin with the raw amino-acid sequence, 308 residues long: Glutaminase 2 (308 aa).

Residues Ser-66, Asn-117, Glu-161, Asn-168, Tyr-192, Tyr-244, and Val-262 each contribute to the substrate site.

The protein belongs to the glutaminase family. In terms of assembly, homotetramer.

The enzyme catalyses L-glutamine + H2O = L-glutamate + NH4(+). The sequence is that of Glutaminase 2 from Escherichia coli O157:H7.